Here is a 765-residue protein sequence, read N- to C-terminus: Phosphoribosylformylglycinamidine synthase subunit PurL (765 aa).

Positions 1 to 13 (MTVSPTSAPTQAI) are enriched in polar residues. Residues 1–32 (MTVSPTSAPTQAIDTVERAATTPDEPQPFGEL) are disordered. Residue histidine 65 is part of the active site. ATP contacts are provided by tyrosine 68 and lysine 112. Glutamate 114 is a binding site for Mg(2+). Substrate is bound by residues 115-118 (SHNH) and arginine 137. Histidine 116 (proton acceptor) is an active-site residue. Aspartate 138 is a binding site for Mg(2+). Glutamine 263 contributes to the substrate binding site. Aspartate 291 lines the Mg(2+) pocket. Residue 335–337 (ESQ) coordinates substrate. Positions 523 and 560 each coordinate ATP. Asparagine 561 is a Mg(2+) binding site. Residue serine 563 coordinates substrate.

This sequence belongs to the FGAMS family. In terms of assembly, monomer. Part of the FGAM synthase complex composed of 1 PurL, 1 PurQ and 2 PurS subunits.

The protein resides in the cytoplasm. It carries out the reaction N(2)-formyl-N(1)-(5-phospho-beta-D-ribosyl)glycinamide + L-glutamine + ATP + H2O = 2-formamido-N(1)-(5-O-phospho-beta-D-ribosyl)acetamidine + L-glutamate + ADP + phosphate + H(+). It functions in the pathway purine metabolism; IMP biosynthesis via de novo pathway; 5-amino-1-(5-phospho-D-ribosyl)imidazole from N(2)-formyl-N(1)-(5-phospho-D-ribosyl)glycinamide: step 1/2. Its function is as follows. Part of the phosphoribosylformylglycinamidine synthase complex involved in the purines biosynthetic pathway. Catalyzes the ATP-dependent conversion of formylglycinamide ribonucleotide (FGAR) and glutamine to yield formylglycinamidine ribonucleotide (FGAM) and glutamate. The FGAM synthase complex is composed of three subunits. PurQ produces an ammonia molecule by converting glutamine to glutamate. PurL transfers the ammonia molecule to FGAR to form FGAM in an ATP-dependent manner. PurS interacts with PurQ and PurL and is thought to assist in the transfer of the ammonia molecule from PurQ to PurL. This is Phosphoribosylformylglycinamidine synthase subunit PurL from Mycobacterium avium (strain 104).